The primary structure comprises 187 residues: Large ribosomal subunit protein uL6 (187 aa).

This sequence belongs to the universal ribosomal protein uL6 family. Part of the 50S ribosomal subunit.

Its function is as follows. This protein binds to the 23S rRNA, and is important in its secondary structure. It is located near the subunit interface in the base of the L7/L12 stalk, and near the tRNA binding site of the peptidyltransferase center. The sequence is that of Large ribosomal subunit protein uL6 from Roseiflexus sp. (strain RS-1).